Reading from the N-terminus, the 437-residue chain is Adenylosuccinate synthetase (437 aa).

GTP-binding positions include 12–18 (GDEGKGK) and 40–42 (GHT). Residue Asp13 is the Proton acceptor of the active site. Asp13 and Gly40 together coordinate Mg(2+). IMP contacts are provided by residues 13 to 16 (DEGK), 38 to 41 (NAGH), Thr128, Arg142, Gln223, Thr238, and Arg302. Catalysis depends on His41, which acts as the Proton donor. Position 298 to 304 (298 to 304 (TTTGRRR)) interacts with substrate. Residues Arg304, 330–332 (KLD), and 412–414 (SLG) each bind GTP.

It belongs to the adenylosuccinate synthetase family. In terms of assembly, homodimer. It depends on Mg(2+) as a cofactor.

It is found in the cytoplasm. The enzyme catalyses IMP + L-aspartate + GTP = N(6)-(1,2-dicarboxyethyl)-AMP + GDP + phosphate + 2 H(+). It functions in the pathway purine metabolism; AMP biosynthesis via de novo pathway; AMP from IMP: step 1/2. In terms of biological role, plays an important role in the de novo pathway of purine nucleotide biosynthesis. Catalyzes the first committed step in the biosynthesis of AMP from IMP. The polypeptide is Adenylosuccinate synthetase (Synechococcus sp. (strain CC9311)).